The following is a 436-amino-acid chain: Putative permease MJ0326 (436 aa).

The next 12 membrane-spanning stretches (helical) occupy residues 24 to 44, 51 to 71, 79 to 99, 103 to 123, 139 to 159, 171 to 191, 194 to 214, 235 to 255, 322 to 342, 345 to 365, 381 to 401, and 416 to 436; these read LAGITTFMTMAYIIFVNPQIL, FGAVMVATCIASAIATLVMGL, LAPGMGLNAYFTYGVCLGMGI, VALGAVFISGVLFIILTLTKI, TAVGIGLFIAFIGLKSAGIIV, LMEPSTLLALFGIFLTSILVS, VIGAILIGIIVTSLIGMILGI, LDIMGALNLGLLTIVLAFFFV, GFVSVVVAMLFLLSLFFYPVV, IPPYATAAALVIVGALMMRSV, ITLLTIPLTFSIATGLALGFI, and VHWLVYVLAVIFALRFVYLSG.

It belongs to the nucleobase:cation symporter-2 (NCS2) (TC 2.A.40) family. Azg-like subfamily.

The protein localises to the cell membrane. The sequence is that of Putative permease MJ0326 from Methanocaldococcus jannaschii (strain ATCC 43067 / DSM 2661 / JAL-1 / JCM 10045 / NBRC 100440) (Methanococcus jannaschii).